Here is a 279-residue protein sequence, read N- to C-terminus: DegV domain-containing protein SpyM3_1149 (279 aa).

In terms of domain architecture, DegV spans 4 to 278 (IKIVTDSSIT…EGAFAVMVRY (275 aa)). Hexadecanoate is bound by residues threonine 62 and serine 95.

Its function is as follows. May bind long-chain fatty acids, such as palmitate, and may play a role in lipid transport or fatty acid metabolism. This chain is DegV domain-containing protein SpyM3_1149, found in Streptococcus pyogenes serotype M3 (strain ATCC BAA-595 / MGAS315).